The chain runs to 456 residues: Phosphoglucomutase/phosphomannomutase (456 aa).

Catalysis depends on serine 101, which acts as the Phosphoserine intermediate. Residues serine 101, aspartate 243, aspartate 245, and aspartate 247 each contribute to the Mg(2+) site. Phosphoserine; by autocatalysis is present on serine 101.

Belongs to the phosphohexose mutase family. Homotetramer. Mg(2+) is required as a cofactor. Activated by phosphorylation.

It carries out the reaction alpha-D-glucose 1-phosphate = alpha-D-glucose 6-phosphate. The catalysed reaction is alpha-D-mannose 1-phosphate = D-mannose 6-phosphate. In terms of biological role, catalyzes the interconversion of glucose 1-phosphate and glucose 6-phosphate, and the interconversion of mannose 1-phosphate and mannose 6-phosphate. Also displays low activity with deoxyribose 1-phosphate and glucosamine 1-phosphate. The sequence is that of Phosphoglucomutase/phosphomannomutase from Thermococcus kodakarensis (strain ATCC BAA-918 / JCM 12380 / KOD1) (Pyrococcus kodakaraensis (strain KOD1)).